Reading from the N-terminus, the 226-residue chain is Elongation factor G (226 aa).

Belongs to the GTP-binding elongation factor family. EF-G/EF-2 subfamily.

It is found in the cytoplasm. Functionally, catalyzes the GTP-dependent ribosomal translocation step during translation elongation. During this step, the ribosome changes from the pre-translocational (PRE) to the post-translocational (POST) state as the newly formed A-site-bound peptidyl-tRNA and P-site-bound deacylated tRNA move to the P and E sites, respectively. Catalyzes the coordinated movement of the two tRNA molecules, the mRNA and conformational changes in the ribosome. The chain is Elongation factor G (fusA) from Neisseria gonorrhoeae.